A 363-amino-acid chain; its full sequence is LIM and cysteine-rich domains protein 1 (363 aa).

S16 bears the Phosphoserine mark. Positions 99–206 (MIMTNPIATG…GEVALPGQGG (108 aa)) constitute a PET domain. Residues 200 to 233 (ALPGQGGLPKEEGKQQEKPEGAETAAPTANGSLG) are disordered. The segment covering 208-220 (PKEEGKQQEKPEG) has biased composition (basic and acidic residues). LIM zinc-binding domains lie at 239–304 (YVCE…SLRP) and 305–363 (RCSG…SKRT).

As to quaternary structure, interacts with beta-dystroglycan. Interacts with GATA1, GATA4 and GATA6. Highly expressed in both skeletal muscle and cardiac muscle.

The protein resides in the cytoplasm. Its subcellular location is the nucleus. Its function is as follows. Transcriptional cofactor that restricts GATA6 function by inhibiting DNA-binding, resulting in repression of GATA6 transcriptional activation of downstream target genes. Represses GATA6-mediated trans activation of lung- and cardiac tissue-specific promoters. Inhibits DNA-binding by GATA4 and GATA1 to the cTNC promoter. Plays a critical role in the development of cardiac hypertrophy via activation of calcineurin/nuclear factor of activated T-cells signaling pathway. This chain is LIM and cysteine-rich domains protein 1 (LMCD1), found in Sus scrofa (Pig).